A 353-amino-acid chain; its full sequence is Cytochrome c biogenesis protein CcsA (353 aa).

8 consecutive transmembrane segments (helical) span residues 15–35 (FAIL…PNLP), 37–57 (LAAL…TLLG), 68–88 (LSNL…VHLI), 97–117 (LVGV…TMTL), 142–162 (VMML…AFLI), 261–281 (IIGL…VWAN), 288–308 (WSWD…AAYL), and 322–342 (AILA…VNLL).

It belongs to the CcmF/CycK/Ccl1/NrfE/CcsA family. As to quaternary structure, may interact with ccs1.

It localises to the cellular thylakoid membrane. Its function is as follows. Required during biogenesis of c-type cytochromes (cytochrome c6 and cytochrome f) at the step of heme attachment. The protein is Cytochrome c biogenesis protein CcsA of Nostoc punctiforme (strain ATCC 29133 / PCC 73102).